Here is a 1082-residue protein sequence, read N- to C-terminus: Protein argonaute 1A (1082 aa).

Disordered stretches follow at residues 17-148 (MMRK…ASQD) and 187-208 (GQSPTSQAIQPAPPSSKSVRFP). Polar residues predominate over residues 29–38 (GESSGTQQAT). The span at 72 to 100 (GRGGGQHQGRGGRYQGRGGPTSHQPGGGP) shows a compositional bias: gly residues. The PAZ domain maps to 420–533 (PVIDFVAQLL…LPMEVCKIVE (114 aa)). Residues 709-1030 (LLIAILPDNN…AAFRARFYME (322 aa)) form the Piwi domain. The disordered stretch occupies residues 1036 to 1065 (SGSMASGAHTRGGGPLPGARSTKPAGNVAV).

It belongs to the argonaute family. Ago subfamily.

Probably involved in the RNA silencing pathway. May bind to short RNAs such as microRNAs (miRNAs) or short interfering RNAs (siRNAs), and represses the translation of mRNAs which are complementary to them. The sequence is that of Protein argonaute 1A (AGO1A) from Oryza sativa subsp. japonica (Rice).